The sequence spans 352 residues: Holliday junction branch migration complex subunit RuvB (352 aa).

Residues 5–191 (TDDFSEQRII…FGIVARLEFY (187 aa)) form a large ATPase domain (RuvB-L) region. ATP is bound by residues leucine 30, arginine 31, glycine 72, lysine 75, threonine 76, threonine 77, 138-140 (EDY), arginine 181, tyrosine 191, and arginine 228. A Mg(2+)-binding site is contributed by threonine 76. Residues 192-262 (TPLELTKIVT…MADAALVMLD (71 aa)) form a small ATPAse domain (RuvB-S) region. Residues 265-352 (PVGFDLMDRK…GPNGDLWAGQ (88 aa)) are head domain (RuvB-H). Residues arginine 301, arginine 320, and arginine 325 each contribute to the DNA site.

Belongs to the RuvB family. As to quaternary structure, homohexamer. Forms an RuvA(8)-RuvB(12)-Holliday junction (HJ) complex. HJ DNA is sandwiched between 2 RuvA tetramers; dsDNA enters through RuvA and exits via RuvB. An RuvB hexamer assembles on each DNA strand where it exits the tetramer. Each RuvB hexamer is contacted by two RuvA subunits (via domain III) on 2 adjacent RuvB subunits; this complex drives branch migration. In the full resolvosome a probable DNA-RuvA(4)-RuvB(12)-RuvC(2) complex forms which resolves the HJ.

The protein localises to the cytoplasm. The catalysed reaction is ATP + H2O = ADP + phosphate + H(+). Functionally, the RuvA-RuvB-RuvC complex processes Holliday junction (HJ) DNA during genetic recombination and DNA repair, while the RuvA-RuvB complex plays an important role in the rescue of blocked DNA replication forks via replication fork reversal (RFR). RuvA specifically binds to HJ cruciform DNA, conferring on it an open structure. The RuvB hexamer acts as an ATP-dependent pump, pulling dsDNA into and through the RuvAB complex. RuvB forms 2 homohexamers on either side of HJ DNA bound by 1 or 2 RuvA tetramers; 4 subunits per hexamer contact DNA at a time. Coordinated motions by a converter formed by DNA-disengaged RuvB subunits stimulates ATP hydrolysis and nucleotide exchange. Immobilization of the converter enables RuvB to convert the ATP-contained energy into a lever motion, pulling 2 nucleotides of DNA out of the RuvA tetramer per ATP hydrolyzed, thus driving DNA branch migration. The RuvB motors rotate together with the DNA substrate, which together with the progressing nucleotide cycle form the mechanistic basis for DNA recombination by continuous HJ branch migration. Branch migration allows RuvC to scan DNA until it finds its consensus sequence, where it cleaves and resolves cruciform DNA. The chain is Holliday junction branch migration complex subunit RuvB from Janthinobacterium sp. (strain Marseille) (Minibacterium massiliensis).